We begin with the raw amino-acid sequence, 410 residues long: Gamma-glutamyl phosphate reductase (410 aa).

It belongs to the gamma-glutamyl phosphate reductase family.

It localises to the cytoplasm. It carries out the reaction L-glutamate 5-semialdehyde + phosphate + NADP(+) = L-glutamyl 5-phosphate + NADPH + H(+). It participates in amino-acid biosynthesis; L-proline biosynthesis; L-glutamate 5-semialdehyde from L-glutamate: step 2/2. In terms of biological role, catalyzes the NADPH-dependent reduction of L-glutamate 5-phosphate into L-glutamate 5-semialdehyde and phosphate. The product spontaneously undergoes cyclization to form 1-pyrroline-5-carboxylate. This chain is Gamma-glutamyl phosphate reductase, found in Sulfurovum sp. (strain NBC37-1).